The following is a 555-amino-acid chain: Pentatricopeptide repeat-containing protein At2g44880 (555 aa).

12 PPR repeats span residues 41 to 75 (DSFL…TCFA), 77 to 111 (DNFT…GFCA), 112 to 142 (DMYV…MPHR), 143 to 173 (SEVS…MPHV), 175 to 205 (DVVI…MTHK), 206 to 240 (TVIT…NLVS), 241 to 267 (WNTM…MQAT), 273 to 307 (DDVT…KLDK), 308 to 342 (KVKV…QVAS), 343 to 370 (WNAM…MIEE), 373 to 407 (DEIT…GLNA), and 408 to 438 (KIEH…MPFE). The segment at 443–518 (ILSSFLSACG…EVGCSLIEIN (76 aa)) is type E motif. A type E(+) motif region spans residues 519–549 (YIVSEFISGDTTHPHRRSIHLVLGDLLMHMN).

It belongs to the PPR family. PCMP-E subfamily.

The polypeptide is Pentatricopeptide repeat-containing protein At2g44880 (PCMP-E9) (Arabidopsis thaliana (Mouse-ear cress)).